The chain runs to 532 residues: Intercellular adhesion molecule 1 (532 aa).

An N-terminal signal peptide occupies residues 1–27; sequence MAPSSPRPALPALLVLLGALFPGPGNA. Residues 28–480 are Extracellular-facing; it reads QTSVSPPKVI…TVNVLSPRYE (453 aa). Ig-like C2-type domains follow at residues 41–103 and 128–193; these read GGSV…QSTA and GKDL…LDLR. Intrachain disulfides connect Cys-48–Cys-92, Cys-52–Cys-96, and Cys-135–Cys-186. The N-linked (GlcNAc...) asparagine glycan is linked to Asn-145. Positions 152–154 match the Cell attachment site; atypical motif; sequence RGE. N-linked (GlcNAc...) asparagine glycosylation is found at Asn-183, Asn-202, Asn-267, and Asn-296. Ig-like C2-type domains lie at 230-297 and 325-378; these read DTQG…LGNQ and GTEV…LEVA. A disulfide bridge links Cys-237 with Cys-290. The cysteines at positions 332 and 371 are disulfide-linked. 2 N-linked (GlcNAc...) asparagine glycosylation sites follow: Asn-385 and Asn-406. 3 cysteine pairs are disulfide-bonded: Cys-403-Cys-419, Cys-419-Cys-457, and Cys-431-Cys-457. An Ig-like C2-type 5 domain is found at 412–464; the sequence is NSQQTPMCQASGNPLPELKCLKDGTFPLPVGESVTVTRDLEGTYLCRARSTQG. The helical transmembrane segment at 481–503 threads the bilayer; the sequence is IVIITVVAAAVIMGTAGLSTYLY. The Cytoplasmic segment spans residues 504–532; sequence NRQRKIRKYRLQQAQKGTPMKPNTQATPP. Residues Thr-521 and Thr-530 each carry the phosphothreonine modification.

This sequence belongs to the immunoglobulin superfamily. ICAM family. As to quaternary structure, homodimer. Interacts with MUC1 and promotes cell aggregation in epithelial cells. Interacts with ARHGEF26/SGEF. Interacts (on T cell side) with CD81, CD247 and CD9 at immunological synapses between antigen-presenting cells and T cells. In terms of processing, monoubiquitinated, which is promoted by MARCH9 and leads to endocytosis.

The protein localises to the membrane. In terms of biological role, ICAM proteins are ligands for the leukocyte adhesion protein LFA-1 (integrin alpha-L/beta-2). During leukocyte trans-endothelial migration, ICAM1 engagement promotes the assembly of endothelial apical cups through ARHGEF26/SGEF and RHOG activation. This chain is Intercellular adhesion molecule 1 (ICAM1), found in Pan troglodytes (Chimpanzee).